We begin with the raw amino-acid sequence, 367 residues long: 2-aminoethylphosphonate--pyruvate transaminase (367 aa).

Residue lysine 194 is modified to N6-(pyridoxal phosphate)lysine.

The protein belongs to the class-V pyridoxal-phosphate-dependent aminotransferase family. PhnW subfamily. In terms of assembly, homodimer. The cofactor is pyridoxal 5'-phosphate.

It carries out the reaction (2-aminoethyl)phosphonate + pyruvate = phosphonoacetaldehyde + L-alanine. In terms of biological role, involved in phosphonate degradation. The chain is 2-aminoethylphosphonate--pyruvate transaminase from Salmonella agona (strain SL483).